Consider the following 601-residue polypeptide: Uptake hydrogenase large subunit (601 aa).

The Ni(2+) site is built by Cys74, Cys77, Cys580, and Cys583.

It belongs to the [NiFe]/[NiFeSe] hydrogenase large subunit family. In terms of assembly, heterodimer of a large and a small subunit. It depends on Ni(2+) as a cofactor.

It is found in the cell membrane. The enzyme catalyses H2 + A = AH2. This enzyme recycles the H(2) produced by nitrogenase to increase the production of ATP and to protect nitrogenase against inhibition or damage by O(2) under carbon- or phosphate-limited conditions. This chain is Uptake hydrogenase large subunit (hupL), found in Azotobacter chroococcum mcd 1.